We begin with the raw amino-acid sequence, 262 residues long: Nurim (262 aa).

Residues 1-4 (MAPA) lie on the Nuclear side of the membrane. The helical transmembrane segment at 5-28 (LLLIPAALASFILAFGTGVEFVRF) threads the bilayer. Residues 29 to 58 (TSLRPLLGGIPESGGPDARQGWLAALQDRS) are Perinuclear space-facing. The chain crosses the membrane as a helical span at residues 59–80 (ILAPLAWDLGLLLLFVGQHSLM). Over 81 to 97 (AAERVKAWTSRYFGVLQ) the chain is Nuclear. Residues 98–114 (RSLYVACTALALQLVMR) traverse the membrane as a helical segment. Residues 115 to 133 (YWEPIPKGPVLWEARAEPW) lie on the Perinuclear space side of the membrane. A helical membrane pass occupies residues 134–164 (ATWVPLLCFVLHVISWLLIFSILLVFDYAEL). At 165–191 (MGLKQVYYHVLGLGEPLALKSPRALRL) the chain is on the nuclear side. A helical transmembrane segment spans residues 192 to 210 (FSHLRHPVCVELLTVLWVV). Residues 211–216 (PTLGTD) are Perinuclear space-facing. Residues 217–234 (RLLLAFLLTLYLGLAHGL) traverse the membrane as a helical segment. At 235–262 (DQQDLRYLRAQLQRKLHLLSRPQDGEAE) the chain is on the nuclear side.

It belongs to the nurim family.

The protein resides in the nucleus inner membrane. This chain is Nurim (NRM), found in Homo sapiens (Human).